A 551-amino-acid polypeptide reads, in one-letter code: Interleukin-2 receptor subunit beta (551 aa).

The first 26 residues, 1-26, serve as a signal peptide directing secretion; it reads MAAPALSWRLPLLILLLPLATSWASA. Topologically, residues 27–240 are extracellular; it reads AVNGTSQFTC…TKPAALGKDT (214 aa). Asparagine 29, asparagine 43, and asparagine 71 each carry an N-linked (GlcNAc...) asparagine glycan. 3 disulfide bridges follow: cysteine 36–cysteine 46, cysteine 59–cysteine 110, and cysteine 74–cysteine 86. Residues 134–234 enclose the Fibronectin type-III domain; that stretch reads APISLQVVHV…QPLAFRTKPA (101 aa). An N-linked (GlcNAc...) asparagine glycan is attached at asparagine 149. The WSXWS motif motif lies at 220–224; the sequence is WSPWS. A helical membrane pass occupies residues 241-265; the sequence is IPWLGHLLVGLSGAFGFIILVYLLI. Over 266-551 the chain is Cytoplasmic; the sequence is NCRNTGPWLK…LQGQDPTHLV (286 aa). Positions 278–286 match the Box 1 motif motif; the sequence is LKCNTPDPS. 2 disordered regions span residues 389-416 and 432-486; these read EEDP…GEDD and PSLL…VDFQ.

Belongs to the type I cytokine receptor family. Type 4 subfamily. Non-covalent dimer of an alpha and a beta subunit. IL2R exists in 3 different forms: a high affinity dimer, an intermediate affinity monomer (beta subunit), and a low affinity monomer (alpha subunit). The high and intermediate affinity forms also associate with a gamma subunit. Interacts with SHB upon interleukin stimulation. In terms of assembly, (Microbial infection) Interacts with HTLV-1 accessory protein p12I.

The protein resides in the cell membrane. In terms of biological role, receptor for interleukin-2. This beta subunit is involved in receptor mediated endocytosis and transduces the mitogenic signals of IL2. Probably in association with IL15RA, involved in the stimulation of neutrophil phagocytosis by IL15. The chain is Interleukin-2 receptor subunit beta from Homo sapiens (Human).